The primary structure comprises 232 residues: MKRAVVVFSGGQDSTTCLIQALKQYDEVHCVTFDYGQRHRAEIEVAQELSVALGAKAHKLLDVGLLNELAISSLTRDNIPVPAYDSTQSNGLPSTFVPGRNILFLTLAAIYAYQVEAEAVITGVCETDFSGYPDCRDEFVKALNQAIVLGIARDIRFETPLMWLNKAETWALADYYHQLELVQQDTLTCYNGIKGNGCGECAACHLRANGLQQYQINKAEVMASLKQKTGLV.

8-18 is a binding site for ATP; it reads FSGGQDSTTCL. Zn(2+) is bound by residues cysteine 189, cysteine 198, cysteine 201, and cysteine 204.

Belongs to the QueC family. It depends on Zn(2+) as a cofactor.

The enzyme catalyses 7-carboxy-7-deazaguanine + NH4(+) + ATP = 7-cyano-7-deazaguanine + ADP + phosphate + H2O + H(+). Its pathway is purine metabolism; 7-cyano-7-deazaguanine biosynthesis. Catalyzes the ATP-dependent conversion of 7-carboxy-7-deazaguanine (CDG) to 7-cyano-7-deazaguanine (preQ(0)). This is 7-cyano-7-deazaguanine synthase from Serratia proteamaculans (strain 568).